We begin with the raw amino-acid sequence, 575 residues long: Cytoskeleton-associated protein 4 (575 aa).

The disordered stretch occupies residues 1–73; the sequence is MPSAKQRGSK…RGRSSAATAN (73 aa). Topologically, residues 1–85 are cytoplasmic; the sequence is MPSAKQRGSK…SASCSRRLGR (85 aa). 3 positions are modified to phosphoserine: Ser-3, Ser-17, and Ser-19. Lys-21 is subject to N6-acetyllysine. Residues 37 to 53 are compositionally biased toward pro residues; sequence PAAPQQPQPPAPHPPQH. Cys-79 is lipidated: S-palmitoyl cysteine; by ZDHHC2. Residues 86-108 traverse the membrane as a helical segment; it reads VLNFLFYLSLVAAAAFSGWYVHH. Topologically, residues 109-575 are extracellular; that stretch reads VLEEVQQVRR…LKVEKIHEKI (467 aa). Positions 125–193 form a coiled coil; that stretch reads RQRDELGQGL…QKLQNEILKD (69 aa). Ser-211, Ser-292, and Ser-367 each carry phosphoserine. Coiled-coil stretches lie at residues 236 to 438 and 507 to 575; these read DVQK…VGNL and SSLD…HEKI.

In terms of assembly, interacts with REEP5. Post-translationally, reversibly palmitoylated. Palmitoylation at Cys-79 by DHHC2 is required for its trafficking from the ER to the plasma membrane and for its perinuclear localization. In terms of processing, increased phosphorylation during mitosis prevents binding to microtubules. As to expression, expressed in cardiomyocytes (at protein level).

It localises to the endoplasmic reticulum membrane. It is found in the cell membrane. The protein resides in the cytoplasm. The protein localises to the cytoskeleton. Its subcellular location is the perinuclear region. In terms of biological role, high-affinity epithelial cell surface receptor for APF. Functionally, mediates the anchoring of the endoplasmic reticulum to microtubules. This is Cytoskeleton-associated protein 4 (Ckap4) from Mus musculus (Mouse).